The chain runs to 239 residues: Insulin-like growth factor-binding protein 3 receptor (239 aa).

The N-terminal stretch at Met1 to Gly38 is a signal peptide. Over Gly39 to Leu205 the chain is Extracellular. N-linked (GlcNAc...) asparagine glycans are attached at residues Asn101 and Asn167. A helical transmembrane segment spans residues Leu206 to Phe226. At His227 to Leu239 the chain is on the cytoplasmic side.

Interacts with IGFBP3. Interacts with CASP8.

The protein localises to the cell membrane. Cell death receptor specific for IGFBP3, may mediate caspase-8-dependent apoptosis upon ligand binding. The chain is Insulin-like growth factor-binding protein 3 receptor (TMEM219) from Bos taurus (Bovine).